A 770-amino-acid polypeptide reads, in one-letter code: DEAD-box ATP-dependent RNA helicase 24 (770 aa).

The tract at residues 1 to 106 (MSKRPKLGGF…ADSDDEDDPV (106 aa)) is disordered. Polar residues predominate over residues 14-26 (RPTSYSFERSQPP). Residues 34–43 (DDPDLDDIAF) show a composition bias toward acidic residues. Residues 44-55 (SDDAAAPSDAPP) show a composition bias toward low complexity. Residues 219 to 247 (KSFADCGFPVQLMNAIAKQGYEKPTTIQC) carry the Q motif motif. Positions 250 to 425 (LPIVLSGRDI…REILTDPIRV (176 aa)) constitute a Helicase ATP-binding domain. Residue 263-270 (AKTGSGKT) participates in ATP binding. The short motif at 373–376 (DEAD) is the DEAD box element. One can recognise a Helicase C-terminal domain in the interval 436-599 (DIKQVVNVLP…DVPNELMDLA (164 aa)). The segment covering 604-613 (RFRANRDSRK) has biased composition (basic and acidic residues). Disordered stretches follow at residues 604 to 640 (RFRA…RGRG), 683 to 704 (VSAS…PSSF), and 729 to 770 (LPAP…GWDR). Over residues 621–635 (GKGGGGGGGGGSGAR) the composition is skewed to gly residues. Low complexity predominate over residues 683 to 697 (VSASSSNTPSNSAPS). Over residues 744 to 753 (TVENANPNPE) the composition is skewed to polar residues. The segment covering 754–770 (SSRDRTRERKRPSGWDR) has biased composition (basic and acidic residues).

Belongs to the DEAD box helicase family.

The enzyme catalyses ATP + H2O = ADP + phosphate + H(+). The chain is DEAD-box ATP-dependent RNA helicase 24 from Oryza sativa subsp. japonica (Rice).